A 322-amino-acid polypeptide reads, in one-letter code: DNA repair and recombination protein RadA (322 aa).

105-112 (GMFGSGKT) serves as a coordination point for ATP.

Belongs to the eukaryotic RecA-like protein family.

Involved in DNA repair and in homologous recombination. Binds and assemble on single-stranded DNA to form a nucleoprotein filament. Hydrolyzes ATP in a ssDNA-dependent manner and promotes DNA strand exchange between homologous DNA molecules. This is DNA repair and recombination protein RadA from Methanococcus maripaludis (strain DSM 14266 / JCM 13030 / NBRC 101832 / S2 / LL).